The sequence spans 1076 residues: Carbamoyl phosphate synthase large chain (1076 aa).

The tract at residues 1–403 (MPKRTDIQSI…SLQKALRGLE (403 aa)) is carboxyphosphate synthetic domain. 12 residues coordinate ATP: Arg-129, Arg-169, Gly-175, Gly-176, Glu-208, Leu-210, Glu-215, Gly-241, Val-242, His-243, Gln-285, and Glu-299. The 196-residue stretch at 133-328 (DQAMKRIGLE…IAKIAAKLAV (196 aa)) folds into the ATP-grasp 1 domain. Mg(2+) contacts are provided by Gln-285, Glu-299, and Asn-301. 3 residues coordinate Mn(2+): Gln-285, Glu-299, and Asn-301. The interval 404–553 (TGNDGLDPKV…YSSYEEECEA (150 aa)) is oligomerization domain. Residues 554–935 (EVSDRPKIMV…AFYKAQLGAG (382 aa)) form a carbamoyl phosphate synthetic domain region. In terms of domain architecture, ATP-grasp 2 spans 678-869 (QHMVDKLGLK…LAQVAARCMA (192 aa)). ATP is bound by residues Arg-714, His-753, Leu-755, Glu-760, Gly-785, Val-786, His-787, Ser-788, Gln-828, and Glu-840. Mg(2+) contacts are provided by Gln-828, Glu-840, and Asn-842. Mn(2+) contacts are provided by Gln-828, Glu-840, and Asn-842. An MGS-like domain is found at 936 to 1076 (EAIPALEGER…LQELHAGVSQ (141 aa)). The allosteric domain stretch occupies residues 936 to 1076 (EAIPALEGER…LQELHAGVSQ (141 aa)).

This sequence belongs to the CarB family. Composed of two chains; the small (or glutamine) chain promotes the hydrolysis of glutamine to ammonia, which is used by the large (or ammonia) chain to synthesize carbamoyl phosphate. Tetramer of heterodimers (alpha,beta)4. Requires Mg(2+) as cofactor. Mn(2+) serves as cofactor.

It carries out the reaction hydrogencarbonate + L-glutamine + 2 ATP + H2O = carbamoyl phosphate + L-glutamate + 2 ADP + phosphate + 2 H(+). The catalysed reaction is hydrogencarbonate + NH4(+) + 2 ATP = carbamoyl phosphate + 2 ADP + phosphate + 2 H(+). Its pathway is amino-acid biosynthesis; L-arginine biosynthesis; carbamoyl phosphate from bicarbonate: step 1/1. It functions in the pathway pyrimidine metabolism; UMP biosynthesis via de novo pathway; (S)-dihydroorotate from bicarbonate: step 1/3. Its function is as follows. Large subunit of the glutamine-dependent carbamoyl phosphate synthetase (CPSase). CPSase catalyzes the formation of carbamoyl phosphate from the ammonia moiety of glutamine, carbonate, and phosphate donated by ATP, constituting the first step of 2 biosynthetic pathways, one leading to arginine and/or urea and the other to pyrimidine nucleotides. The large subunit (synthetase) binds the substrates ammonia (free or transferred from glutamine from the small subunit), hydrogencarbonate and ATP and carries out an ATP-coupled ligase reaction, activating hydrogencarbonate by forming carboxy phosphate which reacts with ammonia to form carbamoyl phosphate. This chain is Carbamoyl phosphate synthase large chain, found in Halomonas eurihalina.